A 611-amino-acid polypeptide reads, in one-letter code: Elongation factor 4 1 (611 aa).

A tr-type G domain is found at Gln11–Gln193. GTP contacts are provided by residues Asp23–Thr28 and Asn140–Asp143.

This sequence belongs to the TRAFAC class translation factor GTPase superfamily. Classic translation factor GTPase family. LepA subfamily.

The protein resides in the cell membrane. The enzyme catalyses GTP + H2O = GDP + phosphate + H(+). In terms of biological role, required for accurate and efficient protein synthesis under certain stress conditions. May act as a fidelity factor of the translation reaction, by catalyzing a one-codon backward translocation of tRNAs on improperly translocated ribosomes. Back-translocation proceeds from a post-translocation (POST) complex to a pre-translocation (PRE) complex, thus giving elongation factor G a second chance to translocate the tRNAs correctly. Binds to ribosomes in a GTP-dependent manner. The protein is Elongation factor 4 1 of Lactiplantibacillus plantarum (strain ATCC BAA-793 / NCIMB 8826 / WCFS1) (Lactobacillus plantarum).